The following is a 727-amino-acid chain: DNA ligase (727 aa).

Residues 71–75 (DGEFD), 120–121 (SL), and Glu-150 contribute to the NAD(+) site. Lys-152 functions as the N6-AMP-lysine intermediate in the catalytic mechanism. Residues Arg-173, Glu-213, Lys-329, and Lys-353 each contribute to the NAD(+) site. Positions 447, 450, 466, and 472 each coordinate Zn(2+). The BRCT domain occupies 636 to 725 (SIERHLTGLS…PEAAAEAALP (90 aa)).

Belongs to the NAD-dependent DNA ligase family. LigA subfamily. It depends on Mg(2+) as a cofactor. Mn(2+) serves as cofactor.

It carries out the reaction NAD(+) + (deoxyribonucleotide)n-3'-hydroxyl + 5'-phospho-(deoxyribonucleotide)m = (deoxyribonucleotide)n+m + AMP + beta-nicotinamide D-nucleotide.. Functionally, DNA ligase that catalyzes the formation of phosphodiester linkages between 5'-phosphoryl and 3'-hydroxyl groups in double-stranded DNA using NAD as a coenzyme and as the energy source for the reaction. It is essential for DNA replication and repair of damaged DNA. This Saccharopolyspora erythraea (strain ATCC 11635 / DSM 40517 / JCM 4748 / NBRC 13426 / NCIMB 8594 / NRRL 2338) protein is DNA ligase.